Reading from the N-terminus, the 190-residue chain is MNNNLQGDAIAAAIDVLNEERVIAYPTEAVFGVGCDPDSETAVMRLLELKQRPVDKGLILIAANYEQLKPYIDDTMLTDVQRETIFSRWPGPVTFVFPAPATTPRWLTGRFDSLAVRVTDHPLVVALCQAYGKPLVSTSANLSGLPPCRTVDEVRAQFGAAFPVVPGETGGRLNPSEIRDALTGELFRQG.

The YrdC-like domain occupies 7-190 (GDAIAAAIDV…ALTGELFRQG (184 aa)).

The protein belongs to the SUA5 family. TsaC subfamily.

The protein localises to the cytoplasm. It catalyses the reaction L-threonine + hydrogencarbonate + ATP = L-threonylcarbamoyladenylate + diphosphate + H2O. Its function is as follows. Required for the formation of a threonylcarbamoyl group on adenosine at position 37 (t(6)A37) in tRNAs that read codons beginning with adenine. Catalyzes the conversion of L-threonine, HCO(3)(-)/CO(2) and ATP to give threonylcarbamoyl-AMP (TC-AMP) as the acyladenylate intermediate, with the release of diphosphate. This chain is Threonylcarbamoyl-AMP synthase, found in Escherichia coli O157:H7.